The chain runs to 451 residues: Methionine aminopeptidase 2-2 (451 aa).

The segment at 1 to 97 (MAAQVEDDVA…PRVLISDLFP (97 aa)) is disordered. Residues 19–28 (TKPTNGTSQP) show a composition bias toward polar residues. A compositionally biased stretch (acidic residues) spans 35–45 (EAEDSDDDAEG). The segment covering 60 to 73 (KKKKKRKPRKKKKA) has biased composition (basic residues). Positions 74–83 (GTSATAGAKS) are enriched in low complexity. Residue histidine 204 coordinates substrate. Positions 224, 235, and 304 each coordinate a divalent metal cation. Histidine 312 is a substrate binding site. A divalent metal cation is bound by residues glutamate 337 and glutamate 432.

This sequence belongs to the peptidase M24A family. Methionine aminopeptidase eukaryotic type 2 subfamily. It depends on Co(2+) as a cofactor. Zn(2+) is required as a cofactor. The cofactor is Mn(2+). Requires Fe(2+) as cofactor.

The protein localises to the cytoplasm. The enzyme catalyses Release of N-terminal amino acids, preferentially methionine, from peptides and arylamides.. Cotranslationally removes the N-terminal methionine from nascent proteins. The N-terminal methionine is often cleaved when the second residue in the primary sequence is small and uncharged (Met-Ala-, Cys, Gly, Pro, Ser, Thr, or Val). This chain is Methionine aminopeptidase 2-2, found in Leptosphaeria maculans (strain JN3 / isolate v23.1.3 / race Av1-4-5-6-7-8) (Blackleg fungus).